A 221-amino-acid chain; its full sequence is Lipoprotein-releasing system ATP-binding protein LolD (221 aa).

The region spanning 6-220 (LILKKISKHY…YNLKNGLLNI (215 aa)) is the ABC transporter domain. Residue 42-49 (GSSGSGKS) coordinates ATP.

This sequence belongs to the ABC transporter superfamily. Lipoprotein translocase (TC 3.A.1.125) family. In terms of assembly, the complex is composed of two ATP-binding proteins (LolD) and two transmembrane proteins (LolC and LolE).

It localises to the cell inner membrane. Functionally, part of the ABC transporter complex LolCDE involved in the translocation of mature outer membrane-directed lipoproteins, from the inner membrane to the periplasmic chaperone, LolA. Responsible for the formation of the LolA-lipoprotein complex in an ATP-dependent manner. This chain is Lipoprotein-releasing system ATP-binding protein LolD, found in Rickettsia typhi (strain ATCC VR-144 / Wilmington).